Consider the following 295-residue polypeptide: Sulfotransferase 1A1 (295 aa).

Residue 48–53 (KSGTTW) coordinates 3'-phosphoadenylyl sulfate. 106–108 (KTH) is a substrate binding site. The Proton acceptor role is filled by H108. 3'-phosphoadenylyl sulfate is bound by residues R130, S138, Y193, 227–232 (TSFKEM), and 255–259 (FMRKG). S138 bears the Phosphoserine mark.

Belongs to the sulfotransferase 1 family. As to quaternary structure, homodimer. As to expression, distal lung parenchyma.

It is found in the cytoplasm. The catalysed reaction is a phenol + 3'-phosphoadenylyl sulfate = an aryl sulfate + adenosine 3',5'-bisphosphate + H(+). It carries out the reaction 17beta-estradiol + 3'-phosphoadenylyl sulfate = 17beta-estradiol 3-sulfate + adenosine 3',5'-bisphosphate + H(+). The enzyme catalyses 4-ethylphenol + 3'-phosphoadenylyl sulfate = 4-ethylphenyl sulfate + adenosine 3',5'-bisphosphate + H(+). It catalyses the reaction 4-nitrophenol + 3'-phosphoadenylyl sulfate = 4-nitrophenyl sulfate + adenosine 3',5'-bisphosphate. The catalysed reaction is dopamine + 3'-phosphoadenylyl sulfate = dopamine 3-O-sulfate + adenosine 3',5'-bisphosphate + H(+). It carries out the reaction dopamine + 3'-phosphoadenylyl sulfate = dopamine 4-O-sulfate + adenosine 3',5'-bisphosphate + H(+). The enzyme catalyses 3,3',5-triiodo-L-thyronine + 3'-phosphoadenylyl sulfate = 3,3',5-triiodo-L-thyronine sulfate + adenosine 3',5'-bisphosphate + H(+). It catalyses the reaction 3,3',5'-triiodo-L-thyronine + 3'-phosphoadenylyl sulfate = 3,3',5'-triiodo-L-thyronine sulfate + adenosine 3',5'-bisphosphate + H(+). The catalysed reaction is 3,3'-diiodo-L-thyronine + 3'-phosphoadenylyl sulfate = 3,3'-diiodo-L-thyronine sulfate + adenosine 3',5'-bisphosphate + H(+). It carries out the reaction L-thyroxine + 3'-phosphoadenylyl sulfate = L-thyroxine sulfate + adenosine 3',5'-bisphosphate + H(+). Functionally, sulfotransferase that utilizes 3'-phospho-5'-adenylyl sulfate (PAPS) as sulfonate donor to catalyze the sulfate conjugation of a wide variety of acceptor molecules bearing a hydroxyl or an amine group. Sulfonation increases the water solubility of most compounds, and therefore their renal excretion, but it can also result in bioactivation to form active metabolites. Displays broad substrate specificity for small phenolic compounds. Plays an important role in the sulfonation of endogenous molecules such as steroid hormones. Mediates also the metabolic activation of carcinogenic N-hydroxyarylamines leading to highly reactive intermediates capable of forming DNA adducts, potentially resulting in mutagenesis. May play a role in gut microbiota-host metabolic interaction. O-sulfonates 4-ethylphenol (4-EP), a dietary tyrosine-derived metabolite produced by gut bacteria. The product 4-EPS crosses the blood-brain barrier and may negatively regulate oligodendrocyte maturation and myelination, affecting the functional connectivity of different brain regions associated with the limbic system. Catalyzes the sulfate conjugation of dopamine. Catalyzes the sulfation of T4 (L-thyroxine/3,5,3',5'-tetraiodothyronine), T3 (3,5,3'-triiodothyronine), rT3 (3,3',5'-triiodothyronine) and 3,3'-T2 (3,3'-diiodothyronine), with a substrate preference of 3,3'-T2 &gt; rT3 &gt; T3 &gt; T4. The polypeptide is Sulfotransferase 1A1 (SULT1A1) (Bos taurus (Bovine)).